The sequence spans 102 residues: Small ribosomal subunit protein uS10 (102 aa).

It belongs to the universal ribosomal protein uS10 family. Part of the 30S ribosomal subunit.

Involved in the binding of tRNA to the ribosomes. The sequence is that of Small ribosomal subunit protein uS10 from Thermotoga neapolitana (strain ATCC 49049 / DSM 4359 / NBRC 107923 / NS-E).